The sequence spans 896 residues: Translation initiation factor IF-2 (896 aa).

Residues 93–219 (VKRDPQEAER…RMAEENEKNW (127 aa)) show a composition bias toward basic and acidic residues. Residues 93 to 307 (VKRDPQEAER…GSALQQGFQK (215 aa)) form a disordered region. The segment covering 256–271 (GRSRSSKAARPAKKGN) has biased composition (basic residues). Residues 272–285 (KHAESKADREEARA) are compositionally biased toward basic and acidic residues. The tr-type G domain occupies 395-564 (PRAPVVTIMG…LLQAEVLELK (170 aa)). Residues 404–411 (GHVDHGKT) form a G1 region. Residue 404-411 (GHVDHGKT) coordinates GTP. The interval 429-433 (GITQH) is G2. The tract at residues 450–453 (DTPG) is G3. Residues 450 to 454 (DTPGH) and 504 to 507 (NKID) contribute to the GTP site. Positions 504 to 507 (NKID) are G4. Residues 540–542 (SAK) are G5.

This sequence belongs to the TRAFAC class translation factor GTPase superfamily. Classic translation factor GTPase family. IF-2 subfamily.

It localises to the cytoplasm. In terms of biological role, one of the essential components for the initiation of protein synthesis. Protects formylmethionyl-tRNA from spontaneous hydrolysis and promotes its binding to the 30S ribosomal subunits. Also involved in the hydrolysis of GTP during the formation of the 70S ribosomal complex. The protein is Translation initiation factor IF-2 of Klebsiella pneumoniae subsp. pneumoniae (strain ATCC 700721 / MGH 78578).